The chain runs to 62 residues: Large ribosomal subunit protein uL30 (62 aa).

It belongs to the universal ribosomal protein uL30 family. As to quaternary structure, part of the 50S ribosomal subunit.

The protein is Large ribosomal subunit protein uL30 of Marinobacter nauticus (strain ATCC 700491 / DSM 11845 / VT8) (Marinobacter aquaeolei).